The sequence spans 1434 residues: Probable ATP-dependent RNA helicase spindle-E (1434 aa).

The Helicase ATP-binding domain maps to 125-292; sequence LAAINAHPVV…FTTTNSIPPV (168 aa). 138–145 serves as a coordination point for ATP; sequence GETGCGKT. A DEAH box motif is present at residues 238–241; that stretch reads DEVH. One can recognise a Helicase C-terminal domain in the interval 354 to 526; that stretch reads QSRQSYDEAL…NSVLKAKVLN (173 aa). Positions 938–1001 constitute a Tudor domain; the sequence is ASAIAKGMMV…RLMPRELTEQ (64 aa).

It belongs to the DEAD box helicase family. DEAH subfamily.

It localises to the cytoplasm. The protein localises to the perinuclear region. The protein resides in the cytoplasmic ribonucleoprotein granule. The enzyme catalyses ATP + H2O = ADP + phosphate + H(+). Functionally, probable ATP-binding RNA helicase which plays a central role during spermatogenesis and oogenesis by repressing transposable elements and preventing their mobilization, which is essential for the germline integrity. Acts via the piRNA metabolic process, which mediates the repression of transposable elements during meiosis by forming complexes composed of piRNAs and Piwi and govern the methylation and subsequent repression of transposons. Involved in the repression of LTR retrotransposon copia. Also involved in telomere regulation by repressing specialized telomeric retroelements HeT-A, TAHRE, and TART; Drosophila telomeres being maintained by transposition of specialized telomeric retroelements. Involved in telomeric trans-silencing, a repression mechanism by which a transposon or a transgene inserted in subtelomeric heterochromatin has the capacity to repress in trans in the female germline, a homologous transposon, or transgene located in euchromatin. Involved in the repression of testis-expressed Stellate genes by the homologous Su(Ste) repeats. Required for anteroposterior and dorsoventral axis formation during oogenesis. Key component of the perinuclear meiotic nuage, an electron dense structure involved in the post-transcriptional regulation of transposons and mRNAs; required for recruitment of other nuage comonents including vas, krimp, aub and mael. May have a role in production of piwi-interacting RNA (piRNA). This is Probable ATP-dependent RNA helicase spindle-E from Drosophila melanogaster (Fruit fly).